Here is a 366-residue protein sequence, read N- to C-terminus: Phospho-N-acetylmuramoyl-pentapeptide-transferase (366 aa).

Helical transmembrane passes span 27–47 (AALF…INSL), 71–91 (TPTM…LLWA), 93–113 (LSNV…AIGF), 134–154 (LGIE…TALA), 174–194 (FMIN…VGAG), 205–225 (GLAI…AYLA), 245–265 (LAVV…FNAP), 268–288 (AIFM…TVAV), 294–314 (IVMA…IIQV), and 343–363 (QVVI…LSTL).

It belongs to the glycosyltransferase 4 family. MraY subfamily. Mg(2+) serves as cofactor.

It localises to the cell inner membrane. It carries out the reaction UDP-N-acetyl-alpha-D-muramoyl-L-alanyl-gamma-D-glutamyl-meso-2,6-diaminopimeloyl-D-alanyl-D-alanine + di-trans,octa-cis-undecaprenyl phosphate = di-trans,octa-cis-undecaprenyl diphospho-N-acetyl-alpha-D-muramoyl-L-alanyl-D-glutamyl-meso-2,6-diaminopimeloyl-D-alanyl-D-alanine + UMP. It participates in cell wall biogenesis; peptidoglycan biosynthesis. Functionally, catalyzes the initial step of the lipid cycle reactions in the biosynthesis of the cell wall peptidoglycan: transfers peptidoglycan precursor phospho-MurNAc-pentapeptide from UDP-MurNAc-pentapeptide onto the lipid carrier undecaprenyl phosphate, yielding undecaprenyl-pyrophosphoryl-MurNAc-pentapeptide, known as lipid I. This Rhizobium leguminosarum bv. trifolii (strain WSM2304) protein is Phospho-N-acetylmuramoyl-pentapeptide-transferase.